The primary structure comprises 479 residues: Cyclin-dependent kinase F-1 (479 aa).

The region spanning 21 to 418 (YEIFERVGSG…TMEMLNDKYL (398 aa)) is the Protein kinase domain. ATP contacts are provided by residues 27–35 (VGSGAYADV) and Lys-50. A Phosphotyrosine modification is found at Tyr-32. The Proton acceptor role is filled by Asp-146. Phosphoserine is present on residues Ser-179, Ser-208, and Ser-247. Residues 187–221 (KLEDKDGETSEPPEVIPDYENSPRQGSDGQEREAM) form a disordered region. At Thr-290 the chain carries Phosphothreonine. Positions 434 to 479 (PTMSGPDEDSPRKWNDYREMDSDSDFDGFGPMNVKPTSSGFTIEFP) are disordered. Residues 442–454 (DSPRKWNDYREMD) show a composition bias toward basic and acidic residues. Residues 468–479 (KPTSSGFTIEFP) are compositionally biased toward polar residues.

Belongs to the protein kinase superfamily. CMGC Ser/Thr protein kinase family. CDC2/CDKX subfamily. Highly expressed in suspension cell culture. Expressed at low levels in all plant organs.

It carries out the reaction L-seryl-[protein] + ATP = O-phospho-L-seryl-[protein] + ADP + H(+). The catalysed reaction is L-threonyl-[protein] + ATP = O-phospho-L-threonyl-[protein] + ADP + H(+). The enzyme catalyses [DNA-directed RNA polymerase] + ATP = phospho-[DNA-directed RNA polymerase] + ADP + H(+). CDK-activating kinase that modulates CDKD-2 and CDKD-3 activities by phosphorylation of the T-loop. Activates CDKD-2 C-terminal domain (CTD) kinase activity. Activates CDKA-1 probably by phosphorylation. Possesses a CDK kinase activity independently of association with cyclin CYCH1-1. Phosphorylates the CTD of the large subunit of RNA polymerase II. The sequence is that of Cyclin-dependent kinase F-1 (CDKF-1) from Arabidopsis thaliana (Mouse-ear cress).